A 626-amino-acid chain; its full sequence is Procollagen galactosyltransferase 2 (626 aa).

Residues 1-27 form the signal peptide; it reads MAARPAATLAWSLLLLSSALLREGCRA. N-linked (GlcNAc...) asparagine glycosylation is found at Asn-97, Asn-185, Asn-382, and Asn-580. The disordered stretch occupies residues 604 to 626; that stretch reads NAKNTEALPPPTSLDTVPSRDEL. Positions 623-626 match the Prevents secretion from ER motif; that stretch reads RDEL.

This sequence belongs to the glycosyltransferase 25 family. In terms of tissue distribution, expressed in brain and skeletal muscle.

It localises to the endoplasmic reticulum lumen. The enzyme catalyses (5R)-5-hydroxy-L-lysyl-[collagen] + UDP-alpha-D-galactose = (5R)-5-O-(beta-D-galactosyl)-5-hydroxy-L-lysyl-[collagen] + UDP + H(+). Its function is as follows. Beta-galactosyltransferase that transfers beta-galactose to hydroxylysine residues of collagen. In Homo sapiens (Human), this protein is Procollagen galactosyltransferase 2 (COLGALT2).